We begin with the raw amino-acid sequence, 91 residues long: Small ribosomal subunit protein bS20 (91 aa).

The disordered stretch occupies residues 1-28 (MPNIKSAIKRTKTIEKRRAHRASQKSDL). Basic residues predominate over residues 7–23 (AIKRTKTIEKRRAHRAS).

Belongs to the bacterial ribosomal protein bS20 family.

In terms of biological role, binds directly to 16S ribosomal RNA. The protein is Small ribosomal subunit protein bS20 of Brevibacillus brevis (strain 47 / JCM 6285 / NBRC 100599).